Reading from the N-terminus, the 58-residue chain is Small ribosomal subunit protein bS21B (58 aa).

The protein belongs to the bacterial ribosomal protein bS21 family.

This is Small ribosomal subunit protein bS21B (rpsU2) from Nostoc sp. (strain PCC 7120 / SAG 25.82 / UTEX 2576).